The following is a 100-amino-acid chain: uncharacterized protein (100 aa).

In terms of assembly, may interact with ribosomes.

This is an uncharacterized protein from Saccharomyces cerevisiae (strain ATCC 204508 / S288c) (Baker's yeast).